The primary structure comprises 317 residues: Transaldolase (317 aa).

Catalysis depends on Lys126, which acts as the Schiff-base intermediate with substrate.

It belongs to the transaldolase family. Type 1 subfamily. In terms of assembly, homodimer.

The protein resides in the cytoplasm. The catalysed reaction is D-sedoheptulose 7-phosphate + D-glyceraldehyde 3-phosphate = D-erythrose 4-phosphate + beta-D-fructose 6-phosphate. It functions in the pathway carbohydrate degradation; pentose phosphate pathway; D-glyceraldehyde 3-phosphate and beta-D-fructose 6-phosphate from D-ribose 5-phosphate and D-xylulose 5-phosphate (non-oxidative stage): step 2/3. Transaldolase is important for the balance of metabolites in the pentose-phosphate pathway. The protein is Transaldolase of Burkholderia ambifaria (strain ATCC BAA-244 / DSM 16087 / CCUG 44356 / LMG 19182 / AMMD) (Burkholderia cepacia (strain AMMD)).